The sequence spans 1165 residues: ATP-dependent helicase/deoxyribonuclease subunit B (1165 aa).

One can recognise a UvrD-like helicase ATP-binding domain in the interval 1 to 324 (MRFIIGGAGS…LVEAQNRREE (324 aa)). 6-13 (GGAGSGKS) lines the ATP pocket. Residues 282–597 (PLRFRGAPEL…IVGTVERSRH (316 aa)) form the UvrD-like helicase C-terminal domain. 4 residues coordinate [4Fe-4S] cluster: cysteine 803, cysteine 1121, cysteine 1124, and cysteine 1130.

Belongs to the helicase family. AddB/RexB type 1 subfamily. In terms of assembly, heterodimer of AddA and AddB. Mg(2+) serves as cofactor. The cofactor is [4Fe-4S] cluster.

Functionally, the heterodimer acts as both an ATP-dependent DNA helicase and an ATP-dependent, dual-direction single-stranded exonuclease. Recognizes the chi site generating a DNA molecule suitable for the initiation of homologous recombination. The AddB subunit has 5' -&gt; 3' nuclease activity but not helicase activity. This chain is ATP-dependent helicase/deoxyribonuclease subunit B, found in Symbiobacterium thermophilum (strain DSM 24528 / JCM 14929 / IAM 14863 / T).